Here is a 382-residue protein sequence, read N- to C-terminus: Nitric oxide reductase FlRd-NAD(+) reductase (382 aa).

It belongs to the FAD-dependent oxidoreductase family. FAD is required as a cofactor.

Its subcellular location is the cytoplasm. The catalysed reaction is 2 reduced [nitric oxide reductase rubredoxin domain] + NAD(+) + H(+) = 2 oxidized [nitric oxide reductase rubredoxin domain] + NADH. It functions in the pathway nitrogen metabolism; nitric oxide reduction. Its function is as follows. One of at least two accessory proteins for anaerobic nitric oxide (NO) reductase. Reduces the rubredoxin moiety of NO reductase. The chain is Nitric oxide reductase FlRd-NAD(+) reductase from Vibrio vulnificus (strain CMCP6).